Consider the following 357-residue polypeptide: N-acetyl-gamma-glutamyl-phosphate reductase (357 aa).

Residue C160 is part of the active site.

The protein belongs to the NAGSA dehydrogenase family. Type 1 subfamily.

It localises to the cytoplasm. The catalysed reaction is N-acetyl-L-glutamate 5-semialdehyde + phosphate + NADP(+) = N-acetyl-L-glutamyl 5-phosphate + NADPH + H(+). It functions in the pathway amino-acid biosynthesis; L-arginine biosynthesis; N(2)-acetyl-L-ornithine from L-glutamate: step 3/4. Catalyzes the NADPH-dependent reduction of N-acetyl-5-glutamyl phosphate to yield N-acetyl-L-glutamate 5-semialdehyde. The chain is N-acetyl-gamma-glutamyl-phosphate reductase from Prochlorococcus marinus (strain MIT 9313).